Consider the following 432-residue polypeptide: Fibrinogen gamma chain (432 aa).

Residues 1 to 24 form the signal peptide; it reads MGRIGTPVFLAFLSALTCSLQVHA. Residues 169-412 form the Fibrinogen C-terminal domain; that stretch reads KISPITGKDC…MTTMKLLPMG (244 aa). A disulfide bond links Cys-178 and Cys-207. The N-linked (GlcNAc...) asparagine glycan is linked to Asn-227. The Ca(2+) site is built by Asp-340, Asp-342, Tyr-344, and Gly-346. A disulfide bridge links Cys-348 with Cys-361. Residues 413–432 are disordered; the sequence is RDLSGHGGQQQSKGNSRGDN. Over residues 421–432 the composition is skewed to polar residues; that stretch reads QQQSKGNSRGDN.

As to quaternary structure, heterohexamer; disulfide linked. Contains 2 sets of 3 non-identical chains (alpha, beta and gamma). The 2 heterotrimers are in head to head conformation with the N-termini in a small central domain. In terms of processing, conversion of fibrinogen to fibrin is triggered by thrombin, which cleaves fibrinopeptides A and B from alpha and beta chains, and thus exposes the N-terminal polymerization sites responsible for the formation of the soft clot. The soft clot is converted into the hard clot by factor XIIIA which catalyzes the epsilon-(gamma-glutamyl)lysine cross-linking between gamma chains (stronger) and between alpha chains (weaker) of different monomers.

It is found in the secreted. Together with fibrinogen alpha (FGA) and fibrinogen beta (FGB), polymerizes to form an insoluble fibrin matrix. Has a major function in hemostasis as one of the primary components of blood clots. The polypeptide is Fibrinogen gamma chain (FGG) (Petromyzon marinus (Sea lamprey)).